Here is a 430-residue protein sequence, read N- to C-terminus: Endo-beta-1,4-glucanase celB (430 aa).

The first 16 residues, 1-16 (MALLLSLSLLATTISA), serve as a signal peptide directing secretion. Asn43 and Asn153 each carry an N-linked (GlcNAc...) asparagine glycan. Glu216 acts as the Nucleophile in catalysis. Glu221 acts as the Proton donor in catalysis. A glycan (N-linked (GlcNAc...) asparagine) is linked at Asn395.

The protein belongs to the glycosyl hydrolase 7 (cellulase C) family.

The protein resides in the secreted. The catalysed reaction is Endohydrolysis of (1-&gt;4)-beta-D-glucosidic linkages in cellulose, lichenin and cereal beta-D-glucans.. In terms of biological role, has endoglucanase activity on substrates containing beta-1,4 glycosidic bonds, like in carboxymethylcellulose (CMC), hydroxyethylcellulose (HEC) and beta-glucan. Involved in the degradation of complex natural cellulosic substrates. The chain is Endo-beta-1,4-glucanase celB (celB) from Emericella nidulans (strain FGSC A4 / ATCC 38163 / CBS 112.46 / NRRL 194 / M139) (Aspergillus nidulans).